A 317-amino-acid polypeptide reads, in one-letter code: Dehydrogenase/reductase SDR family protein 7-like (317 aa).

The Cytoplasmic portion of the chain corresponds to 1 to 10 (MKNLAERSAG). Residues 11-31 (SLYWWLLATLFLPIAIPGLVL) traverse the membrane as a helical; Signal-anchor for type II membrane protein segment. Residues 32 to 317 (KLLTMMKEQR…KKRAEKLNST (286 aa)) are Peroxisomal-facing. 52–76 (LITGASSGLGEALAHSFFLAGCKVV) is a binding site for NAD(+). Position 189 (serine 189) interacts with substrate. Residue tyrosine 202 is the Proton acceptor of the active site.

It belongs to the short-chain dehydrogenases/reductases (SDR) family.

The protein localises to the peroxisome membrane. In terms of biological role, putative oxidoreductase. This is Dehydrogenase/reductase SDR family protein 7-like from Anopheles gambiae (African malaria mosquito).